We begin with the raw amino-acid sequence, 415 residues long: Palmitoyl-acyl carrier protein thioesterase, chloroplastic (415 aa).

2 stretches are compositionally biased toward low complexity: residues 1-16 (MVAT…LPSA) and 24-41 (KLGN…KSTP). A chloroplast-targeting transit peptide spans 1–60 (MVATAASSAFFPLPSADTSSRPGKLGNKPSSLSPLKPKSTPNGGLQVKANASAPPKINGS). Residues 1–81 (MVATAASSAF…QEDAHSAPPP (81 aa)) form a disordered region. Catalysis depends on residues asparagine 314, histidine 316, and cysteine 351.

This sequence belongs to the acyl-ACP thioesterase family.

The protein resides in the plastid. It is found in the chloroplast. The catalysed reaction is hexadecanoyl-[ACP] + H2O = hexadecanoate + holo-[ACP] + H(+). Its function is as follows. Plays an essential role in chain termination during de novo fatty acid synthesis. High thioesterase activity for palmitoyl-ACP versus other acyl-ACPs. The sequence is that of Palmitoyl-acyl carrier protein thioesterase, chloroplastic (FATB1) from Cuphea hookeriana (Cigar plant).